The primary structure comprises 604 residues: Baculoviral IAP repeat-containing protein 3 (604 aa).

The stretch at 29-96 is one BIR 1 repeat; that stretch reads ELYRMSTYST…RNLYPSCSFI (68 aa). Omega-N-methylarginine is present on Arg-130. Ser-140 carries the post-translational modification Phosphoserine. 2 BIR repeats span residues 169–235 and 255–322; these read EEDR…CPFV and LAAR…CEYL. Residues Cys-292, Cys-295, His-312, and Cys-319 each coordinate Zn(2+). Residues 439–529 enclose the CARD domain; the sequence is RESDDVSLIR…MLYKRFFVQQ (91 aa). The segment at 557–592 adopts an RING-type zinc-finger fold; that stretch reads CKVCMDKEVSIVFIPCGHLVVCRDCAPSLRKCPICR.

Belongs to the IAP family. As to quaternary structure, interacts with PRSS25; the interaction inhibits apoptotic suppressor activity. The BIR motifs region interacts with TNF receptor associated factors 1 and 2 (TRAF1 and TRAF2) to form a heteromeric complex, which is then recruited to the tumor necrosis factor receptor 2 (TNFR2). Interaction with TRAF2 is required for ubiquitination of IKBKE, degradation of NFKBIA and activation of NF-kappa-B. Interacts with RIP1, RIP2, RIP3, RIP4 and USP19. Post-translationally, auto-ubiquitinated and degraded by the proteasome in apoptotic cells.

It is found in the cytoplasm. It localises to the nucleus. It carries out the reaction S-ubiquitinyl-[E2 ubiquitin-conjugating enzyme]-L-cysteine + [acceptor protein]-L-lysine = [E2 ubiquitin-conjugating enzyme]-L-cysteine + N(6)-ubiquitinyl-[acceptor protein]-L-lysine.. Its activity is regulated as follows. USP19 regulates the stability of BIRC3/c-IAP2 by preventing its ubiquitination. Multi-functional protein which regulates not only caspases and apoptosis, but also modulates inflammatory signaling and immunity, mitogenic kinase signaling and cell proliferation, as well as cell invasion and metastasis. Acts as an E3 ubiquitin-protein ligase regulating NF-kappa-B signaling and regulates both canonical and non-canonical NF-kappa-B signaling by acting in opposite directions: acts as a positive regulator of the canonical pathway and suppresses constitutive activation of non-canonical NF-kappa-B signaling. The target proteins for its E3 ubiquitin-protein ligase activity include: RIPK1, RIPK2, RIPK3, RIPK4, CASP3, CASP7, CASP8, IKBKE, TRAF1, and BCL10. Acts as an important regulator of innate immune signaling via regulation of Toll-like receptors (TLRs), Nodlike receptors (NLRs) and RIG-I like receptors (RLRs), collectively referred to as pattern recognition receptors (PRRs). Protects cells from spontaneous formation of the ripoptosome, a large multi-protein complex that has the capability to kill cancer cells in a caspase-dependent and caspase-independent manner. Suppresses ripoptosome formation by ubiquitinating RIPK1 and CASP8. The chain is Baculoviral IAP repeat-containing protein 3 (BIRC3) from Canis lupus familiaris (Dog).